The following is a 76-amino-acid chain: Acyl carrier protein (76 aa).

The Carrier domain occupies 1-76 (MATFDKVKDI…DVVNYIEQNQ (76 aa)). Ser36 carries the post-translational modification O-(pantetheine 4'-phosphoryl)serine.

The protein belongs to the acyl carrier protein (ACP) family. Post-translationally, 4'-phosphopantetheine is transferred from CoA to a specific serine of apo-ACP by AcpS. This modification is essential for activity because fatty acids are bound in thioester linkage to the sulfhydryl of the prosthetic group.

The protein resides in the cytoplasm. It functions in the pathway lipid metabolism; fatty acid biosynthesis. Carrier of the growing fatty acid chain in fatty acid biosynthesis. This Natranaerobius thermophilus (strain ATCC BAA-1301 / DSM 18059 / JW/NM-WN-LF) protein is Acyl carrier protein.